Here is a 203-residue protein sequence, read N- to C-terminus: GTP cyclohydrolase 1 (203 aa).

Residues Cys-87, His-90, and Cys-158 each coordinate Zn(2+).

The protein belongs to the GTP cyclohydrolase I family. Homomer.

The catalysed reaction is GTP + H2O = 7,8-dihydroneopterin 3'-triphosphate + formate + H(+). It participates in cofactor biosynthesis; 7,8-dihydroneopterin triphosphate biosynthesis; 7,8-dihydroneopterin triphosphate from GTP: step 1/1. The polypeptide is GTP cyclohydrolase 1 (Xylella fastidiosa (strain M23)).